The chain runs to 1433 residues: Bacillopeptidase F (1433 aa).

The signal sequence occupies residues 1–30 (MRKKTKNRLISSVLSTVVISSLLFPGAAGA). A propeptide spanning residues 31–194 (SSKVTSPSVK…NMKKAQKAIK (164 aa)) is cleaved from the precursor. One can recognise an Inhibitor I9 domain in the interval 68-177 (TFLIKFKDLA…KVLPNEKRQL (110 aa)). One can recognise a Peptidase S8 domain in the interval 200 to 512 (EWNVDQIDAP…HGLVNAFDAV (313 aa)). Catalysis depends on charge relay system residues D227, H274, and S452. Residues 756-1433 (SAYKGQNIQV…NGKLNMNTEN (678 aa)) constitute a propeptide that is removed on maturation. The interval 800-830 (KLGVEKPSGKQKKKPVNPKKAKPSANTAVKH) is disordered. The segment covering 808 to 821 (GKQKKKPVNPKKAK) has biased composition (basic residues).

Belongs to the peptidase S8 family.

The protein resides in the secreted. The chain is Bacillopeptidase F (bpr) from Bacillus subtilis (strain 168).